Reading from the N-terminus, the 290-residue chain is MRIAFLVDSVSNLKEDKNSHLYVLPLYIIETIAEHQETFKSGFNIDLKTLTDKMINAPKGVKFSTSQTSEEEVRDKVKSIINDYDLIIGIPIDKEISTSYLNWKIVEKEFEDKFHVLDSRIVEVLIAWLISDIKVWLKNNQYSRAGLDEFVYNFRNKCGAILFVTDTKPLVAGGRLSNLKSFIIKSFKFHLLISFLGETGKLQFFNKAQSASSAHKLAVQFLEKKLLKKEVNFRRAALLTTMFETDKNQLIKQEFVTLLNNAVDVSEHLLSPVICTHTGINSYAFLIQTE.

Positions 3-289 (IAFLVDSVSN…INSYAFLIQT (287 aa)) constitute a DegV domain. Residues Thr-65 and Ser-97 each coordinate hexadecanoate.

May bind long-chain fatty acids, such as palmitate, and may play a role in lipid transport or fatty acid metabolism. This is DegV domain-containing protein MG450 from Mycoplasma genitalium (strain ATCC 33530 / DSM 19775 / NCTC 10195 / G37) (Mycoplasmoides genitalium).